Here is a 549-residue protein sequence, read N- to C-terminus: Glucose-6-phosphate isomerase (549 aa).

Glu355 (proton donor) is an active-site residue. Catalysis depends on residues His386 and Lys514.

Belongs to the GPI family.

It localises to the cytoplasm. It carries out the reaction alpha-D-glucose 6-phosphate = beta-D-fructose 6-phosphate. It functions in the pathway carbohydrate biosynthesis; gluconeogenesis. The protein operates within carbohydrate degradation; glycolysis; D-glyceraldehyde 3-phosphate and glycerone phosphate from D-glucose: step 2/4. Its function is as follows. Catalyzes the reversible isomerization of glucose-6-phosphate to fructose-6-phosphate. This is Glucose-6-phosphate isomerase from Pectobacterium carotovorum subsp. carotovorum (strain PC1).